The primary structure comprises 90 residues: Putative beta-neurotoxin RjAa14F (90 aa).

An N-terminal signal peptide occupies residues 1 to 18; the sequence is MKILIFIIASFMLIGVEC. Positions 19 to 89 constitute an LCN-type CS-alpha/beta domain; it reads KEGYPTNSEG…VWDPNNNKCV (71 aa). 4 cysteine pairs are disulfide-bonded: Cys29-Cys88, Cys33-Cys62, Cys40-Cys69, and Cys44-Cys71.

It belongs to the long (4 C-C) scorpion toxin superfamily. Sodium channel inhibitor family. Beta subfamily. As to expression, expressed by the venom gland.

The protein resides in the secreted. Its function is as follows. Beta toxins bind voltage-independently at site-4 of sodium channels (Nav) and shift the voltage of activation toward more negative potentials thereby affecting sodium channel activation and promoting spontaneous and repetitive firing. In Rhopalurus junceus (Caribbean blue scorpion), this protein is Putative beta-neurotoxin RjAa14F.